Here is a 492-residue protein sequence, read N- to C-terminus: MASPSGKGSWTPEAPGFGPRALAPDLVDSVDDAEGLYVAVERCPLCNTTRRRLTCAKCVQSGDFVYFDGRDRERFIDKKERLSQLKNKQEEFQKEVLKAMEGKRLTDQLRWKIMSCKMRIEQLKQTICKGNEEMKKNSEGLLKNKEKNQKLYSRAQRHQEKKEKIQRHNRKLGDLVEKKTSDLREHYDRLACLRRLHILELTSVIFPMDEVKTSGRDPADVSSETDSAMTSSMVSKLAEARRTTYLSGRWVCDDHNGDTSISITGPWISLPNNGDYSAYYNWVEEKKTTQGPDMEHNNPAYTISAALGYATQLVNIVSHILDINLPKKLCNSEFCGENLSKQRLTRAVRKLNANILYLCSSQHVNLDQLQPLHTLRNLMHLVSPHSEHLGRSGPFEVRADLEESMEFVDPGVAGESDVSGDERVSDEETDLGTDWENLPSPRFCDIPSQPVEVSQSQSTQASPPIASSSAGGMISSAAASVTSWFKAYTGHR.

S29 carries the phosphoserine modification. Residues 70–180 adopt a coiled-coil conformation; the sequence is RDRERFIDKK…KLGDLVEKKT (111 aa). Disordered stretches follow at residues 213–232 and 411–473; these read TSGR…MTSS and GVAG…AGGM. A compositionally biased stretch (polar residues) spans 222–232; the sequence is SSETDSAMTSS. Phosphoserine is present on S416. The span at 424-433 shows a compositional bias: acidic residues; that stretch reads VSDEETDLGT. Residue T429 is modified to Phosphothreonine. Positions 447 to 473 are enriched in low complexity; the sequence is PSQPVEVSQSQSTQASPPIASSSAGGM.

Belongs to the ATG14 family. As to quaternary structure, forms homooligomers; homo-oligomerization is essential for the roles in membrane tethering and enhancement of SNARE-mediated fusion. Component of the PI3K (PI3KC3/PI3K-III/class III phosphatidylinositol 3-kinase) complex I (PI3KC3-C1) in which the core composed of the catalytic subunit PIK3C3, the regulatory subunit PIK3R4 and BECN1 is associated with ATG14. PI3KC3-C1 displays a V-shaped architecture with PIK3R4 serving as a bridge between PIK3C3 and the ATG14:BECN1 subcomplex. PI3KC3-C1 can associate with further regulatory subunits. Interacts with PIK3CB. Interacts (via coiled-coil domain) with BECN2 (via coiled-coil domain); this interaction is tighter than BECN2 self-association. Interacts with the STX17-SNAP29 binary t-SNARE complex. Interacts with NRBF2. Interacts with PIK3C3 and BECN1; this interaction is increased in the absence of TMEM39A. Interacts with STEEP1; the interaction is required for trafficking of STING1 from the endoplasmic reticulum. Interacts with ARMC3 (via ARM domains). Post-translationally, ubiquitinated via 'Lys-6', 'Lys-11' and 'Lys-63'-linked polyubiquitin chains on multiple lysines by MARCHF7, leading to ATG14 aggregation and loss of interaction with STX17.

It localises to the cytoplasm. The protein resides in the endoplasmic reticulum membrane. It is found in the preautophagosomal structure membrane. Functionally, required for both basal and inducible autophagy. Determines the localization of the autophagy-specific PI3-kinase complex. Plays a role in autophagosome formation and MAP1LC3/LC3 conjugation to phosphatidylethanolamine. Promotes BECN1 translocation from the trans-Golgi network to autophagosomes. Enhances PIK3C3 activity in a BECN1-dependent manner. Essential for the autophagy-dependent phosphorylation of BECN1. Stimulates the phosphorylation of BECN1, but suppresses the phosphorylation PIK3C3 by AMPK. Binds to STX17-SNAP29 binary t-SNARE complex on autophagosomes and primes it for VAMP8 interaction to promote autophagosome-endolysosome fusion. Modulates the hepatic lipid metabolism. The sequence is that of Beclin 1-associated autophagy-related key regulator from Rattus norvegicus (Rat).